The following is a 29-amino-acid chain: L-serine dehydratase, beta chain (29 aa).

This sequence belongs to the iron-sulfur dependent L-serine dehydratase family. In terms of assembly, heterodimer of an alpha chain and a beta chain. It depends on [4Fe-4S] cluster as a cofactor.

The catalysed reaction is L-serine = pyruvate + NH4(+). Its pathway is carbohydrate biosynthesis; gluconeogenesis. In Anaerotignum propionicum (Clostridium propionicum), this protein is L-serine dehydratase, beta chain.